The chain runs to 921 residues: Sodium/calcium exchanger 2 (921 aa).

A signal peptide spans 1–20; the sequence is MAPLALVGVALLLGAPHCLG. Residues 21–68 lie on the Extracellular side of the membrane; it reads EATPTPSLPPPPANDSDASPGGCQGSYRCQPGVLLPVWEPDDPSLGDK. The interval 23–42 is disordered; it reads TPTPSLPPPPANDSDASPGG. N-linked (GlcNAc...) asparagine glycosylation occurs at N34. A helical membrane pass occupies residues 69–90; the sequence is AARAVVYFVAMVYMFLGLSIIA. At 91–130 the chain is on the cytoplasmic side; it reads DRFMASIEVITSKEKEITITKANGETSVGTVRIWNETVSN. The helical transmembrane segment at 131-152 threads the bilayer; it reads LTLMALGSSAPEILLSVIEVCG. Residues 135–175 form an Alpha-1 repeat; sequence ALGSSAPEILLSVIEVCGHNFQAGELGPGTIVGSAAFNMFV. Residues 153–164 lie on the Extracellular side of the membrane; it reads HNFQAGELGPGT. A helical transmembrane segment spans residues 165 to 185; that stretch reads IVGSAAFNMFVVIAVCVYVIP. Topologically, residues 186–196 are cytoplasmic; the sequence is AGESRKIKHLR. Residues 197–219 traverse the membrane as a helical segment; that stretch reads VFFVTASWSIFAYVWLYLILAVF. Over 220–222 the chain is Extracellular; that stretch reads SPG. Residues 223–246 form a helical membrane-spanning segment; it reads VVQVWEALLTLVFFPVCVVFAWMA. The Cytoplasmic portion of the chain corresponds to 247–720; it reads DKRLLFYKYV…DGSREERLPS (474 aa). Positions 248–267 are putative calmodulin-binding region; the sequence is KRLLFYKYVYKRYRTDPRSG. Residues 372–391 are disordered; the sequence is AADAARRPGANDGAPDDEDD. Calx-beta domains are found at residues 384 to 483 and 512 to 612; these read GAPD…VRLL and ATVT…IELG. 14 residues coordinate Ca(2+): E407, D443, D468, D469, I471, E473, E476, D518, D519, D520, E536, D598, E599, and E600. At S622 the chain carries Phosphoserine. E665 contacts Ca(2+). A helical membrane pass occupies residues 721-740; that stretch reads CFDYVMHFLTVFWKVLFACL. The Extracellular segment spans residues 741 to 747; it reads PPTEYCH. Residues 748–770 traverse the membrane as a helical segment; sequence GWACFGVCILVIGLLTALIGDLA. At 771-772 the chain is on the cytoplasmic side; that stretch reads SH. Residues 773 to 791 form a helical membrane-spanning segment; it reads FGCTVGLKDSVNAVVFVAL. One copy of the Alpha-2 repeat lies at 790–826; the sequence is ALGTSIPDTFASKVAALQDQCADASIGNVTGSNAVNV. Residues 792–822 are Extracellular-facing; that stretch reads GTSIPDTFASKVAALQDQCADASIGNVTGSN. N-linked (GlcNAc...) asparagine glycosylation occurs at N817. Residues 823–843 traverse the membrane as a helical segment; it reads AVNVFLGLGVAWSVAAVYWAV. Residues 844–854 are Cytoplasmic-facing; the sequence is QGRPFEVRTGT. A helical membrane pass occupies residues 855-875; that stretch reads LAFSVTLFTVFAFVGIAVLLY. The Extracellular segment spans residues 876 to 892; the sequence is RRRPHIGGELGGPRGPK. The chain crosses the membrane as a helical span at residues 893-909; sequence LATTALFLGLWFLYILF. Residues 910–921 are Cytoplasmic-facing; that stretch reads ASLEAYCHIRGF.

This sequence belongs to the Ca(2+):cation antiporter (CaCA) (TC 2.A.19) family. SLC8 subfamily. Detected in neocortex and hippocampus on pyramidal cells, astrocyte processes and dendrites (at protein level). Brain and skeletal muscle.

Its subcellular location is the cell membrane. The protein localises to the basolateral cell membrane. It localises to the perikaryon. The protein resides in the cell projection. It is found in the dendrite. Its subcellular location is the dendritic spine. It catalyses the reaction Ca(2+)(in) + 3 Na(+)(out) = Ca(2+)(out) + 3 Na(+)(in). With respect to regulation, calcium transport is down-regulated by Na(+) and stimulated by Ca(2+). Functionally, mediates the electrogenic exchange of Ca(2+) against Na(+) ions across the cell membrane, and thereby contributes to the regulation of cytoplasmic Ca(2+) levels and Ca(2+)-dependent cellular processes. Contributes to cellular Ca(2+) homeostasis in excitable cells. Contributes to the rapid decrease of cytoplasmic Ca(2+) levels back to baseline after neuronal activation, and thereby contributes to modulate synaptic plasticity, learning and memory. Plays a role in regulating urinary Ca(2+) and Na(+) excretion. The polypeptide is Sodium/calcium exchanger 2 (Slc8a2) (Rattus norvegicus (Rat)).